A 119-amino-acid polypeptide reads, in one-letter code: MPKGKKEKVERRQRIHDSIRESMFGTSVRPRLSVYRSNEHIYAQLVDDMEGHTLTSASTLADDVEGETPTEESRSVGELLAERAEDAGIDKAVFDRGGYKYQGRVRALAEGARDGGLQL.

The segment at 54-76 (LTSASTLADDVEGETPTEESRSV) is disordered.

This sequence belongs to the universal ribosomal protein uL18 family. As to quaternary structure, part of the 50S ribosomal subunit; part of the 5S rRNA/L5/L18/L25 subcomplex. Contacts the 5S and 23S rRNAs.

In terms of biological role, this is one of the proteins that bind and probably mediate the attachment of the 5S RNA into the large ribosomal subunit, where it forms part of the central protuberance. This Salinibacter ruber (strain DSM 13855 / M31) protein is Large ribosomal subunit protein uL18.